The primary structure comprises 393 residues: tRNA(Met) cytidine acetate ligase (393 aa).

The ATP site is built by glycine 81, asparagine 142, and arginine 167.

It belongs to the TmcAL family.

It localises to the cytoplasm. The enzyme catalyses cytidine(34) in elongator tRNA(Met) + acetate + ATP = N(4)-acetylcytidine(34) in elongator tRNA(Met) + AMP + diphosphate. In terms of biological role, catalyzes the formation of N(4)-acetylcytidine (ac(4)C) at the wobble position of elongator tRNA(Met), using acetate and ATP as substrates. First activates an acetate ion to form acetyladenylate (Ac-AMP) and then transfers the acetyl group to tRNA to form ac(4)C34. The polypeptide is tRNA(Met) cytidine acetate ligase (Bacillus thuringiensis subsp. konkukian (strain 97-27)).